We begin with the raw amino-acid sequence, 664 residues long: MFKLVSEFEPTGDQPQAIEKLVEGLNRGMRFQTLLGVTGSGKTFTMANVIARVNRPALVISPNKTLAAQLYQEFKTFFPENRVEFFISYYDYYQPEAYIPTKDLYIEKNADINDVIVRMRMSTLKSVRTRRDVIVVASVSCIYATGDPNDFDRMNIKLSVGERLDVFELAEKLAKIGYQRTEDVSLSGCFRIRGDTLEIYPTYQDEGIRVEFFGDEIDAISLIDRFNRTTLERLDKVIIYPAVEFVTTEEKLRRAIESIKEELRERLAELKKQGKVLEYERLKQRTLNDIELLETMGYCPGIENYSRHFDGRKPGEPPYTLLDYFDDDFVVFIDESHITVPQLRAMYNGDRSRKKNLVEYGFRLPSAYDNRPLTFEEFLKKVGQIVFVSATPGDFELSVSEQVVEQIIRPTGLVDPEVEVRPTRGQVDDLINEIVKVKQRGERALVTVLTKKTAELLSEHLTELGIKSLYLHSELDAIERVEVLKKLRRGDVDVVVGVNLLREGLDLPEVSLVAIMDADTEGFLRSETTLIQIIGRTARNVNGKVIMYADRITNAMKRAIEETNRRRRIQLEYNKKHGITPRSIVKPLEIEVFEQFMVKEEPAEYGDTIKNIFSMKESLSLEEYVALLEEEMYRAASELRYEDAAALRDELFRVKETLKKKKGR.

Residues Glu-23 to Arg-180 form the Helicase ATP-binding domain. Residue Gly-36–Thr-43 coordinates ATP. The short motif at Tyr-89 to Ile-112 is the Beta-hairpin element. The 163-residue stretch at Gln-426–Leu-588 folds into the Helicase C-terminal domain. A UVR domain is found at Glu-622 to Thr-657.

Belongs to the UvrB family. Forms a heterotetramer with UvrA during the search for lesions. Interacts with UvrC in an incision complex.

The protein resides in the cytoplasm. Functionally, the UvrABC repair system catalyzes the recognition and processing of DNA lesions. A damage recognition complex composed of 2 UvrA and 2 UvrB subunits scans DNA for abnormalities. Upon binding of the UvrA(2)B(2) complex to a putative damaged site, the DNA wraps around one UvrB monomer. DNA wrap is dependent on ATP binding by UvrB and probably causes local melting of the DNA helix, facilitating insertion of UvrB beta-hairpin between the DNA strands. Then UvrB probes one DNA strand for the presence of a lesion. If a lesion is found the UvrA subunits dissociate and the UvrB-DNA preincision complex is formed. This complex is subsequently bound by UvrC and the second UvrB is released. If no lesion is found, the DNA wraps around the other UvrB subunit that will check the other stand for damage. This chain is UvrABC system protein B, found in Thermotoga neapolitana (strain ATCC 49049 / DSM 4359 / NBRC 107923 / NS-E).